The chain runs to 360 residues: Phosphate acyltransferase (360 aa).

The protein belongs to the PlsX family. As to quaternary structure, homodimer. Probably interacts with PlsY.

Its subcellular location is the cytoplasm. The catalysed reaction is a fatty acyl-[ACP] + phosphate = an acyl phosphate + holo-[ACP]. The protein operates within lipid metabolism; phospholipid metabolism. Functionally, catalyzes the reversible formation of acyl-phosphate (acyl-PO(4)) from acyl-[acyl-carrier-protein] (acyl-ACP). This enzyme utilizes acyl-ACP as fatty acyl donor, but not acyl-CoA. This chain is Phosphate acyltransferase, found in Janthinobacterium sp. (strain Marseille) (Minibacterium massiliensis).